Reading from the N-terminus, the 323-residue chain is L-lactate dehydrogenase (323 aa).

3 residues coordinate NAD(+): valine 11, aspartate 32, and tyrosine 63. Substrate-binding residues include glutamine 80 and arginine 86. Residues serine 99, valine 116–asparagine 118, and serine 141 contribute to the NAD(+) site. Substrate is bound at residue asparagine 118 to aspartate 121. A substrate-binding site is contributed by aspartate 146 to arginine 149. Beta-D-fructose 1,6-bisphosphate contacts are provided by arginine 151 and histidine 166. Histidine 173 serves as the catalytic Proton acceptor. The residue at position 221 (tyrosine 221) is a Phosphotyrosine. A substrate-binding site is contributed by threonine 230.

Belongs to the LDH/MDH superfamily. LDH family. As to quaternary structure, homotetramer.

It is found in the cytoplasm. The catalysed reaction is (S)-lactate + NAD(+) = pyruvate + NADH + H(+). It participates in fermentation; pyruvate fermentation to lactate; (S)-lactate from pyruvate: step 1/1. With respect to regulation, allosterically activated by fructose 1,6-bisphosphate (FBP). In terms of biological role, catalyzes the conversion of lactate to pyruvate. In Kosmotoga olearia (strain ATCC BAA-1733 / DSM 21960 / TBF 19.5.1), this protein is L-lactate dehydrogenase.